The following is a 505-amino-acid chain: MFKAAMDASNETNPNYPKFAHLLSQGWMFGRKVDNSDQQYRFFRDNFPLLCGLVLLHTSLRRGVNLIAGNHKRTGFDFVFGXDIHLCSTRDEFLPYFDSLGYXIFPFLKYIKRNDVATXTYVDXTAILSLFLNDNYXSCTIWNRFYRSWISEVSFQDGMCFSISHCXRMLSYNLDYIEKRKSASEESNLELKNSSSSLSELDDRERLVAPIPLTDYNFVNYMAYITYAPLFIAGPIITFNDYIYQSDYKAMSSVKDYKRTFIYFLRFAFCILVMEFLLHFMYVVAVSKTKAWEGDTPFQLSMLGLFNLNIIWLKLLIPWRLFRLWSLIDGIDPPENMIRCMDNNFSTLAFWRAWHRSYNRWIIRYIYIPLGGGGKYRILNSLCVFSFVAIWHDIELKLLMWGWLVVIFIIPELAATAIFKNYQHEPWYRHVCALGAVINIWMMMLANLFGFCMGKDGTMSLIKTLFTTAVGLRFLFLSLGALFVGSQVMFELREAEKRRGVNVKC.

At 1–217 the chain is on the extracellular side; the sequence is MFKAAMDASN…VAPIPLTDYN (217 aa). Residues 218-238 traverse the membrane as a helical segment; it reads FVNYMAYITYAPLFIAGPIIT. Over 239–266 the chain is Cytoplasmic; sequence FNDYIYQSDYKAMSSVKDYKRTFIYFLR. The chain crosses the membrane as a helical span at residues 267-287; it reads FAFCILVMEFLLHFMYVVAVS. The Extracellular segment spans residues 288 to 296; that stretch reads KTKAWEGDT. A helical membrane pass occupies residues 297–317; it reads PFQLSMLGLFNLNIIWLKLLI. At 318 to 377 the chain is on the cytoplasmic side; it reads PWRLFRLWSLIDGIDPPENMIRCMDNNFSTLAFWRAWHRSYNRWIIRYIYIPLGGGGKYR. 2 helical membrane passes run 378–398 and 399–419; these read ILNSLCVFSFVAIWHDIELKL and LMWGWLVVIFIIPELAATAIF. The active site involves histidine 392. Residues 420–430 lie on the Cytoplasmic side of the membrane; sequence KNYQHEPWYRH. Residues 431 to 451 traverse the membrane as a helical segment; it reads VCALGAVINIWMMMLANLFGF. Residues 452-464 are Extracellular-facing; sequence CMGKDGTMSLIKT. The chain crosses the membrane as a helical span at residues 465-485; that stretch reads LFTTAVGLRFLFLSLGALFVG. The Cytoplasmic segment spans residues 486–505; it reads SQVMFELREAEKRRGVNVKC.

The protein belongs to the membrane-bound acyltransferase family.

The protein resides in the cell membrane. It localises to the endoplasmic reticulum membrane. It is found in the mitochondrion membrane. Functionally, membrane-bound O-acyltransferase involved in the remodeling of glycosylphosphatidylinositol (GPI) anchors. Acts only on GPI-anchored proteins, but not on free GPI lipids. Also involved in lipid metabolism, having profound effects on sphingolipid-sterol-ordered domains integrity and assembly. Involved in cell integrity and apoptosis. The polypeptide is Membrane-bound O-acyltransferase GUP1 (GUP1) (Millerozyma farinosa (Yeast)).